Here is a 438-residue protein sequence, read N- to C-terminus: MAGSAQPAAVHWRLWLAQVGVFAGLALLLLITLIGAASPGAGLPCFYAAIVNYNARNLSADGGAWAQRELGARHPALFLETPTTAAFSAYTAVVLLAVAAFDVAAAIIIRRENSGGFAAAYHMNALATLATPPGALLLGALAAWTLQAAVLLLSHKIMVLAAATYLAHLAPPAAFVGLFCTAGLPGAEYAQAVHALRERSPRAHRLLGPGRAVMINLAGGLLALIIGTAPLMLGQLLGAGLGLSLAQTVVAGVTVFCLAAVLFLVLTELVLSRYTQVLPGPAFGTLVAASCIAVASHDYFHQLRGVVRTQAPRAAARVKLALAGVALLAVAMLVLRLVRACLHHRRKGSAFYGHVSAARQQAARYIARARSSRGMAPLEGDAAALLDRGVASDDEEAVYEAHAPPRPPTIPLRRPEVPHSRASHPRPPPRSPPPAHVK.

Residues 1–13 (MAGSAQPAAVHWR) lie on the Intravirion side of the membrane. The chain crosses the membrane as a helical span at residues 14–34 (LWLAQVGVFAGLALLLLITLI). Residues 35–88 (GAASPGAGLPCFYAAIVNYNARNLSADGGAWAQRELGARHPALFLETPTTAAFS) are Virion surface-facing. Residues 89 to 109 (AYTAVVLLAVAAFDVAAAIII) form a helical membrane-spanning segment. Residues 110 to 132 (RRENSGGFAAAYHMNALATLATP) lie on the Intravirion side of the membrane. The chain crosses the membrane as a helical span at residues 133-153 (PGALLLGALAAWTLQAAVLLL). The Virion surface portion of the chain corresponds to 154-158 (SHKIM). A helical transmembrane segment spans residues 159-179 (VLAAATYLAHLAPPAAFVGLF). The Intravirion segment spans residues 180–212 (CTAGLPGAEYAQAVHALRERSPRAHRLLGPGRA). The helical transmembrane segment at 213 to 233 (VMINLAGGLLALIIGTAPLML) threads the bilayer. Residues 234 to 248 (GQLLGAGLGLSLAQT) lie on the Virion surface side of the membrane. The chain crosses the membrane as a helical span at residues 249–269 (VVAGVTVFCLAAVLFLVLTEL). Residues 270 to 276 (VLSRYTQ) are Intravirion-facing. Residues 277–297 (VLPGPAFGTLVAASCIAVASH) form a helical membrane-spanning segment. Residues 298 to 317 (DYFHQLRGVVRTQAPRAAAR) lie on the Virion surface side of the membrane. The chain crosses the membrane as a helical span at residues 318 to 338 (VKLALAGVALLAVAMLVLRLV). The Intravirion segment spans residues 339–438 (RACLHHRRKG…PRSPPPAHVK (100 aa)). The tract at residues 395–438 (EEAVYEAHAPPRPPTIPLRRPEVPHSRASHPRPPPRSPPPAHVK) is disordered. Residues 425-438 (PRPPPRSPPPAHVK) are compositionally biased toward pro residues.

Belongs to the herpesviridae glycoprotein M family. In terms of assembly, interacts (via N-terminus) with gN (via N-terminus). The gM-gN heterodimer forms the gCII complex. In terms of processing, N-glycosylated. It is not O-glycosylated.

The protein resides in the virion membrane. It is found in the host Golgi apparatus. It localises to the host trans-Golgi network. Its subcellular location is the host endosome membrane. The protein localises to the host nucleus inner membrane. Envelope glycoprotein important for virion assembly and egress. Plays a role in the correct incorporation of gH-gL into virion membrane. Directs the glycoprotein N (gN) to the host trans-Golgi network. This chain is Envelope glycoprotein M, found in Bovine herpesvirus 1.1 (strain Cooper) (BoHV-1).